The primary structure comprises 353 residues: MGWNELVSRAESRWMEGTGPHADIVLSSRIRLARNLDDLPFPQRMSEPDTERLLQAAEAGVREINLVGFPSRVELYRLADTTPLDRQILVEKHLISPQQSKEVMAKAVAISEDEAISIMVNEEDHLRIQVLASGLQLQEAWRVASQVDDALEQRLQFAFDEQLGYLTACPTNVGTGLRASVMMHLPALVLTQQAGRLFHNLSQLGLVVRGLYGEGTEAAGQIFQISNQTSLGKAEEEIIANLEAIARTVIDTEEQARRHLYGEMRLQIEDRVSRAYGILTTARMISSEEAMRLLSDVRLGVALGVVPKIDYRILNELLVAMQPACLQRQAGRELNPLERDVRRAALIRARLSA.

The Phosphagen kinase C-terminal domain occupies 24-256 (IVLSSRIRLA…RTVIDTEEQA (233 aa)). ATP is bound by residues 27–31 (SSRIR), histidine 93, arginine 127, 178–182 (RASVM), and 209–214 (RGLYGE). Residues 339–344 (RDVRRA) carry the RDXXRA motif of the pArg binding pocket involved in allosteric regulation motif.

The protein belongs to the ATP:guanido phosphotransferase family.

It carries out the reaction L-arginyl-[protein] + ATP = N(omega)-phospho-L-arginyl-[protein] + ADP + H(+). Its activity is regulated as follows. Appears to be allosterically activated by the binding of pArg-containing polypeptides to the pArg-binding pocket localized in the C-terminal domain of McsB. Functionally, catalyzes the specific phosphorylation of arginine residues in proteins. The chain is Protein-arginine kinase from Symbiobacterium thermophilum (strain DSM 24528 / JCM 14929 / IAM 14863 / T).